A 520-amino-acid chain; its full sequence is GMP synthase [glutamine-hydrolyzing] (520 aa).

The Glutamine amidotransferase type-1 domain maps to 12–205 (KIIVLDYGSQ…AISICGARGD (194 aa)). The Nucleophile role is filled by Cys-89. Residues His-179 and Glu-181 contribute to the active site. The GMPS ATP-PPase domain occupies 206 to 395 (WSMDNFIDME…LGMPEEIVWR (190 aa)). Residue 233 to 239 (SGGVDSS) coordinates ATP.

In terms of assembly, homodimer.

The enzyme catalyses XMP + L-glutamine + ATP + H2O = GMP + L-glutamate + AMP + diphosphate + 2 H(+). It participates in purine metabolism; GMP biosynthesis; GMP from XMP (L-Gln route): step 1/1. In terms of biological role, catalyzes the synthesis of GMP from XMP. The protein is GMP synthase [glutamine-hydrolyzing] of Streptococcus pyogenes serotype M1.